A 165-amino-acid polypeptide reads, in one-letter code: 2-C-methyl-D-erythritol 2,4-cyclodiphosphate synthase (165 aa).

The a divalent metal cation site is built by aspartate 12 and histidine 14. 4-CDP-2-C-methyl-D-erythritol 2-phosphate contacts are provided by residues 12–14 (DIH) and 38–39 (HS). Position 46 (histidine 46) interacts with a divalent metal cation. Residues 60–62 (DIG), 136–139 (TTNE), and arginine 146 each bind 4-CDP-2-C-methyl-D-erythritol 2-phosphate.

It belongs to the IspF family. As to quaternary structure, homotrimer. The cofactor is a divalent metal cation.

The enzyme catalyses 4-CDP-2-C-methyl-D-erythritol 2-phosphate = 2-C-methyl-D-erythritol 2,4-cyclic diphosphate + CMP. The protein operates within isoprenoid biosynthesis; isopentenyl diphosphate biosynthesis via DXP pathway; isopentenyl diphosphate from 1-deoxy-D-xylulose 5-phosphate: step 4/6. Its function is as follows. Involved in the biosynthesis of isopentenyl diphosphate (IPP) and dimethylallyl diphosphate (DMAPP), two major building blocks of isoprenoid compounds. Catalyzes the conversion of 4-diphosphocytidyl-2-C-methyl-D-erythritol 2-phosphate (CDP-ME2P) to 2-C-methyl-D-erythritol 2,4-cyclodiphosphate (ME-CPP) with a corresponding release of cytidine 5-monophosphate (CMP). The chain is 2-C-methyl-D-erythritol 2,4-cyclodiphosphate synthase from Nostoc sp. (strain PCC 7120 / SAG 25.82 / UTEX 2576).